Reading from the N-terminus, the 964-residue chain is Translation initiation factor IF-2 (964 aa).

Over residues 105–119 the composition is skewed to low complexity; that stretch reads AALAESEASEAAPVV. 2 disordered regions span residues 105-133 and 146-378; these read AALA…EHRR and KARQ…PTEP. 4 stretches are compositionally biased toward basic and acidic residues: residues 123–133, 146–183, 197–253, and 266–278; these read EVARREEEHRR, KARQ…KAEE, EAPR…RAIR, and PAER…KKAE. Over residues 288-302 the composition is skewed to low complexity; the sequence is KPAGEARPAAAKKPA. The segment covering 303-313 has biased composition (pro residues); the sequence is APAPAAAPAPG. A tr-type G domain is found at 464–633; that stretch reads TRPPVVTVMG…LLQAEVLELK (170 aa). Residues 473–480 form a G1 region; sequence GHVDHGKT. A GTP-binding site is contributed by 473–480; sequence GHVDHGKT. The segment at 498 to 502 is G2; it reads GITQH. The tract at residues 519–522 is G3; it reads DTPG. Residues 519–523 and 573–576 contribute to the GTP site; these read DTPGH and TKVD. The interval 573 to 576 is G4; the sequence is TKVD. Residues 609-611 are G5; the sequence is SAK.

This sequence belongs to the TRAFAC class translation factor GTPase superfamily. Classic translation factor GTPase family. IF-2 subfamily.

The protein localises to the cytoplasm. Functionally, one of the essential components for the initiation of protein synthesis. Protects formylmethionyl-tRNA from spontaneous hydrolysis and promotes its binding to the 30S ribosomal subunits. Also involved in the hydrolysis of GTP during the formation of the 70S ribosomal complex. This chain is Translation initiation factor IF-2, found in Ralstonia pickettii (strain 12J).